A 164-amino-acid chain; its full sequence is Nitric oxide synthase, inducible (164 aa).

F3 contacts (6R)-L-erythro-5,6,7,8-tetrahydrobiopterin. A heme b-binding site is contributed by Y18. The segment at 42 to 62 is calmodulin-binding; that stretch reads FKGLIRAVLFSQTLIKSALAK. The Flavodoxin-like domain occupies 66–164; the sequence is CTVLYATETG…SRMYPHFCAF (99 aa). FMN-binding residues include T72, E73, T74, K76, S77, S118, T119, S155, and C162.

It belongs to the NOS family. Homodimer. Requires heme b as cofactor. FAD serves as cofactor. The cofactor is FMN. It depends on (6R)-L-erythro-5,6,7,8-tetrahydrobiopterin as a cofactor.

The protein localises to the cytoplasm. It localises to the cytosol. It catalyses the reaction 2 L-arginine + 3 NADPH + 4 O2 + H(+) = 2 L-citrulline + 2 nitric oxide + 3 NADP(+) + 4 H2O. Its activity is regulated as follows. Not stimulated by calcium/calmodulin. Its function is as follows. Produces nitric oxide (NO) which is a messenger molecule with diverse functions throughout the body. In macrophages, NO mediates tumoricidal and bactericidal actions. Also has nitrosylase activity and mediates cysteine S-nitrosylation of cytoplasmic target proteins such COX2. This is Nitric oxide synthase, inducible (nos2) from Carassius auratus (Goldfish).